The chain runs to 486 residues: N-succinylglutamate 5-semialdehyde dehydrogenase (486 aa).

220–225 is a binding site for NAD(+); the sequence is GSSRTG. Residues Glu243 and Cys277 contribute to the active site.

It belongs to the aldehyde dehydrogenase family. AstD subfamily.

The catalysed reaction is N-succinyl-L-glutamate 5-semialdehyde + NAD(+) + H2O = N-succinyl-L-glutamate + NADH + 2 H(+). It functions in the pathway amino-acid degradation; L-arginine degradation via AST pathway; L-glutamate and succinate from L-arginine: step 4/5. In terms of biological role, catalyzes the NAD-dependent reduction of succinylglutamate semialdehyde into succinylglutamate. The chain is N-succinylglutamate 5-semialdehyde dehydrogenase from Shewanella halifaxensis (strain HAW-EB4).